We begin with the raw amino-acid sequence, 147 residues long: Epididymal secretory protein E3-beta (147 aa).

Residues 1 to 25 (MASSLKIWGTLLALLCILCTLLVQS) form the signal peptide.

Epididymis.

Its subcellular location is the secreted. In terms of biological role, possible function in sperm maturation. This is Epididymal secretory protein E3-beta (EDDM3B) from Homo sapiens (Human).